We begin with the raw amino-acid sequence, 282 residues long: Prohibitin-1 (282 aa).

The short motif at Tyr-106–Leu-109 is the AIM element.

This sequence belongs to the prohibitin family. The mitochondrial prohibitin complex consists of two subunits (phb1 and phb2). The subunits assemble into a membrane-associated ring-shaped supercomplex of approximately 1 mDa.

The protein resides in the mitochondrion inner membrane. Its subcellular location is the cytoplasm. Functionally, prohibitin probably acts as a holdase/unfoldase for the stabilization of newly synthesized mitochondrial proteins. Involved in mitophagy; may act as an adapter for atg8 that supports mitophagosome assembly. Negatively regulates the proteolytic processing of atg32 via the i-AAA protease. Acts as a negative regulator of the m-AAA protease. The sequence is that of Prohibitin-1 (phb1) from Schizosaccharomyces pombe (strain 972 / ATCC 24843) (Fission yeast).